The primary structure comprises 104 residues: MSAIQGIQGVISQLQATAMSARAQEPMPQPTISFAGQLHAALDRISDTQNTARVQAEKFTLGEPGVALNDVMTDMQKASVSMQMGIQVRNKLVAAYQEVMSMQV.

Belongs to the FliE family.

Its subcellular location is the bacterial flagellum basal body. This is Flagellar hook-basal body complex protein FliE from Escherichia fergusonii (strain ATCC 35469 / DSM 13698 / CCUG 18766 / IAM 14443 / JCM 21226 / LMG 7866 / NBRC 102419 / NCTC 12128 / CDC 0568-73).